Consider the following 468-residue polypeptide: Ubiquitin carboxyl-terminal hydrolase MINDY-1 (468 aa).

The segment covering 1–19 (MEQPQTENPAPSKATSAET) has biased composition (polar residues). Residues 1-105 (MEQPQTENPA…RPQELPQSPR (105 aa)) are disordered. Residues 22 to 41 (SENHEALSGPEKHPQDKDGA) show a composition bias toward basic and acidic residues. Residues 43 to 54 (ADGAAGEQEPGD) show a composition bias toward low complexity. Pro residues predominate over residues 68 to 80 (CPPPEASSSPPGP). Phosphoserine is present on Ser-103. Cys-137 acts as the Nucleophile in catalysis. His-319 acts as the Proton acceptor in catalysis. The ubiquitin-binding domain (UBD) stretch occupies residues 388 to 427 (QVDQDYLIALSLQQQQQPQGTLGLSDLELAQQLQQEEYQQ). Low complexity predominate over residues 423 to 432 (EEYQQQQAVQ). Residues 423 to 468 (EEYQQQQAVQPVRTRAPSPQGRGATSGRPAGERRQRSKTESDCVLL) are disordered. Ser-440 is modified (phosphoserine). Positions 452-468 (AGERRQRSKTESDCVLL) are enriched in basic and acidic residues.

Belongs to the MINDY deubiquitinase family. FAM63 subfamily.

It carries out the reaction Thiol-dependent hydrolysis of ester, thioester, amide, peptide and isopeptide bonds formed by the C-terminal Gly of ubiquitin (a 76-residue protein attached to proteins as an intracellular targeting signal).. Hydrolase that can specifically remove 'Lys-48'-linked conjugated ubiquitin from proteins. Has exodeubiquitinase activity and has a preference for long polyubiquitin chains. May play a regulatory role at the level of protein turnover. The sequence is that of Ubiquitin carboxyl-terminal hydrolase MINDY-1 (Mindy1) from Mus musculus (Mouse).